The following is a 214-amino-acid chain: MNYPHPIIAREGWPFIAIAAVIALLIHAVGGFGFAWPFWLLLVFVVQFFRDPQRPIPAQPNAVLCPADGRIVAVETAQDPYANREALKISVFMNVFNVHSQRSPVDGAISKVEYFPGAFLNAAIDKASTENERNAVVIQTASGKTVTSVQIAGLIARRILCYVRAGEPLSRGQRYGFIRFGSRVDVYLPLGSRAKVSIGEKVYASSTILAELEQ.

The active-site Schiff-base intermediate with substrate; via pyruvic acid is Ser182. Ser182 bears the Pyruvic acid (Ser); by autocatalysis mark.

Belongs to the phosphatidylserine decarboxylase family. PSD-A subfamily. Heterodimer of a large membrane-associated beta subunit and a small pyruvoyl-containing alpha subunit. Requires pyruvate as cofactor. Is synthesized initially as an inactive proenzyme. Formation of the active enzyme involves a self-maturation process in which the active site pyruvoyl group is generated from an internal serine residue via an autocatalytic post-translational modification. Two non-identical subunits are generated from the proenzyme in this reaction, and the pyruvate is formed at the N-terminus of the alpha chain, which is derived from the carboxyl end of the proenzyme. The post-translation cleavage follows an unusual pathway, termed non-hydrolytic serinolysis, in which the side chain hydroxyl group of the serine supplies its oxygen atom to form the C-terminus of the beta chain, while the remainder of the serine residue undergoes an oxidative deamination to produce ammonia and the pyruvoyl prosthetic group on the alpha chain.

Its subcellular location is the cell membrane. It carries out the reaction a 1,2-diacyl-sn-glycero-3-phospho-L-serine + H(+) = a 1,2-diacyl-sn-glycero-3-phosphoethanolamine + CO2. Its pathway is phospholipid metabolism; phosphatidylethanolamine biosynthesis; phosphatidylethanolamine from CDP-diacylglycerol: step 2/2. In terms of biological role, catalyzes the formation of phosphatidylethanolamine (PtdEtn) from phosphatidylserine (PtdSer). The protein is Phosphatidylserine decarboxylase proenzyme of Burkholderia cenocepacia (strain ATCC BAA-245 / DSM 16553 / LMG 16656 / NCTC 13227 / J2315 / CF5610) (Burkholderia cepacia (strain J2315)).